Consider the following 92-residue polypeptide: Small ribosomal subunit protein uS19 (92 aa).

The protein belongs to the universal ribosomal protein uS19 family.

Its function is as follows. Protein S19 forms a complex with S13 that binds strongly to the 16S ribosomal RNA. The sequence is that of Small ribosomal subunit protein uS19 from Corynebacterium urealyticum (strain ATCC 43042 / DSM 7109).